The primary structure comprises 84 residues: Large ribosomal subunit protein bL31B (84 aa).

This sequence belongs to the bacterial ribosomal protein bL31 family. Type B subfamily. In terms of assembly, part of the 50S ribosomal subunit.

The protein is Large ribosomal subunit protein bL31B of Parabacteroides distasonis (strain ATCC 8503 / DSM 20701 / CIP 104284 / JCM 5825 / NCTC 11152).